The following is a 288-amino-acid chain: uncharacterized protein (288 aa).

This is an uncharacterized protein from Mycobacterium tuberculosis (strain CDC 1551 / Oshkosh).